A 151-amino-acid polypeptide reads, in one-letter code: NADPH-dependent 7-cyano-7-deazaguanine reductase (151 aa).

C51 serves as the catalytic Thioimide intermediate. D58 functions as the Proton donor in the catalytic mechanism. Substrate is bound by residues 73–75 (VES) and 92–93 (HE).

The protein belongs to the GTP cyclohydrolase I family. QueF type 1 subfamily.

It is found in the cytoplasm. It catalyses the reaction 7-aminomethyl-7-carbaguanine + 2 NADP(+) = 7-cyano-7-deazaguanine + 2 NADPH + 3 H(+). It participates in tRNA modification; tRNA-queuosine biosynthesis. Its function is as follows. Catalyzes the NADPH-dependent reduction of 7-cyano-7-deazaguanine (preQ0) to 7-aminomethyl-7-deazaguanine (preQ1). The sequence is that of NADPH-dependent 7-cyano-7-deazaguanine reductase from Bacteroides fragilis (strain ATCC 25285 / DSM 2151 / CCUG 4856 / JCM 11019 / LMG 10263 / NCTC 9343 / Onslow / VPI 2553 / EN-2).